We begin with the raw amino-acid sequence, 341 residues long: HTH-type transcriptional repressor PurR (341 aa).

An HTH lacI-type domain is found at 2–56 (ATIKDVAKRAGVSTTTVSHVINKTRFVAEETKAAVRAAIKELHYSPSAVARSLKV). The H-T-H motif DNA-binding region spans 4–23 (IKDVAKRAGVSTTTVSHVIN). A DNA-binding region spans residues 48 to 56 (SAVARSLKV). Hypoxanthine is bound by residues Y73, R190, T192, F221, and D275.

In terms of assembly, homodimer.

It functions in the pathway purine metabolism; purine nucleotide biosynthesis [regulation]. Functionally, is the main repressor of the genes involved in the de novo synthesis of purine nucleotides, regulating purB, purC, purEK, purF, purHD, purL, purMN and guaBA expression. PurR is allosterically activated to bind its cognate DNA by binding the purine corepressors, hypoxanthine or guanine, thereby effecting transcription repression. The protein is HTH-type transcriptional repressor PurR of Pectobacterium carotovorum subsp. carotovorum (strain PC1).